The following is a 309-amino-acid chain: Probable sugar phosphate/phosphate translocator At5g05820 (309 aa).

A run of 10 helical transmembrane segments spans residues 9–29 (FFTIGLVASWYSSNIGVLLLN), 42–62 (IFLTMCHMTACSLLSYVAIAW), 77–97 (FFKIAALSLVFCVSVVFGNIS), 100–120 (FLPVSFNQAIGATTPFFTAVF), 130–150 (AWLTYFTLVPVVTGVVIASGG), 154–174 (FHLFGFLMCIAATAARALKSV), 192–212 (LLLYMAPIAVVLLLPATLIME), 229–249 (IVWYLLFNSALAYLVNLTNFL), 256–278 (ALTLQVLGNAKGAVAVVVSILIF), and 282–301 (VSVTGMLGYSLTVCGVILYS). Positions 30–147 (KYLLSNYGFK…VPVVTGVVIA (118 aa)) constitute an EamA domain.

Belongs to the TPT transporter family. TPT (TC 2.A.7.9) subfamily.

Its subcellular location is the membrane. This is Probable sugar phosphate/phosphate translocator At5g05820 from Arabidopsis thaliana (Mouse-ear cress).